The chain runs to 554 residues: Solute carrier family 22 member 1 (554 aa).

Over 1–24 the chain is Cytoplasmic; that stretch reads MPSVDDVLEQVGEFGWFQKQAFLN. Residues 25–45 form a helical membrane-spanning segment; it reads LCLTSVAFAPIYVGIVFLGFT. The Extracellular segment spans residues 46–234; it reads PDHRCRSPGV…EFVGLGYRKT (189 aa). N71 is a glycosylation site (N-linked (GlcNAc...) asparagine). A helical membrane pass occupies residues 235–255; sequence VAILYQTAFSVGLVLLSGLAY. Residues 256–261 lie on the Cytoplasmic side of the membrane; sequence AVPHWR. The chain crosses the membrane as a helical span at residues 262 to 282; it reads SLQLAVSLPIFLLLLCYWFVP. A Proline-rich sequence motif is present at residues 282–286; sequence PESPR. At 283-347 the chain is on the extracellular side; sequence ESPRWLLSQK…FRTQNLRKYT (65 aa). S333 carries the phosphoserine modification. The chain crosses the membrane as a helical span at residues 348–368; sequence FILMYLWFTSSVLYQGLIMHV. Residues 369-376 are Cytoplasmic-facing; it reads GATGGSLY. Residues 377–397 form a helical membrane-spanning segment; it reads LDFLYSALVEFPAAFVILLII. At 398 to 402 the chain is on the extracellular side; it reads DRFGR. The chain crosses the membrane as a helical span at residues 403–423; that stretch reads LYLLAGSNLLAGAACFFMIFI. Residues 424–431 are Cytoplasmic-facing; the sequence is SHDLHWLS. Residues 432–452 form a helical membrane-spanning segment; the sequence is IVAACIGRMGITIVFQMVCLV. At 453 to 464 the chain is on the extracellular side; that stretch reads SAELYPTFIRNL. A helical transmembrane segment spans residues 465–485; the sequence is GVMVCSSLCDLGGVVAPFLVF. The Cytoplasmic segment spans residues 486 to 492; that stretch reads RLTEVWR. A helical transmembrane segment spans residues 493–513; sequence GLPLVLFAALGLVAGGMSLLL. The Extracellular segment spans residues 514-554; it reads PETKGVALPETIEEVERLGRKAKPRDNMIYLQVKMPEPAGL.

The protein belongs to the major facilitator (TC 2.A.1) superfamily. Organic cation transporter (TC 2.A.1.19) family. In terms of processing, phosphorylated.

The protein localises to the basolateral cell membrane. It is found in the apical cell membrane. Its subcellular location is the lateral cell membrane. It localises to the basal cell membrane. The protein resides in the cell membrane. The enzyme catalyses 1-methylnicotinamide(out) = 1-methylnicotinamide(in). The catalysed reaction is dopamine(out) = dopamine(in). It catalyses the reaction serotonin(out) = serotonin(in). It carries out the reaction (R)-adrenaline(out) = (R)-adrenaline(in). The enzyme catalyses (R)-noradrenaline(out) = (R)-noradrenaline(in). The catalysed reaction is histamine(out) = histamine(in). It catalyses the reaction guanidine(out) = guanidine(in). It carries out the reaction choline(out) = choline(in). The enzyme catalyses acetylcholine(in) = acetylcholine(out). The catalysed reaction is thiamine(in) = thiamine(out). It catalyses the reaction spermidine(in) = spermidine(out). It carries out the reaction agmatine(out) = agmatine(in). The enzyme catalyses putrescine(out) = putrescine(in). The catalysed reaction is (R)-carnitine(in) = (R)-carnitine(out). It catalyses the reaction O-isobutanoyl-(R)-carnitine(in) = O-isobutanoyl-(R)-carnitine(out). It carries out the reaction O-acetyl-(R)-carnitine(in) = O-acetyl-(R)-carnitine(out). The enzyme catalyses O-3-hydroxybutanoyl-(R)-carnitine(in) = O-3-hydroxybutanoyl-(R)-carnitine(out). The catalysed reaction is O-propanoyl-(R)-carnitine(in) = O-propanoyl-(R)-carnitine(out). It catalyses the reaction O-butanoyl-(R)-carnitine(in) = O-butanoyl-(R)-carnitine(out). It carries out the reaction O-2-methylbutanoyl-(R)-carnitine(in) = O-2-methylbutanoyl-(R)-carnitine(out). The enzyme catalyses O-3-methylbutanoyl-(R)-carnitine(in) = O-3-methylbutanoyl-(R)-carnitine(out). The catalysed reaction is O-hexanoyl-(R)-carnitine(in) = O-hexanoyl-(R)-carnitine(out). It catalyses the reaction L-histidyl-L-proline diketopiperazine(in) = L-histidyl-L-proline diketopiperazine(out). It carries out the reaction (R)-salsolinol(in) = (R)-salsolinol(out). The enzyme catalyses prostaglandin F2alpha(out) = prostaglandin F2alpha(in). The catalysed reaction is prostaglandin E2(out) = prostaglandin E2(in). With respect to regulation, phosphorylation of the transporter leads to changes in its substrate affinity, resulting in a regulation of the transport activity. In contrast with rat ortholog, ASP uptake is inhibited by protein kinase A (PKA) and C (PKC) activation. ASP uptake is also endogenously activated by calmodulin, the calmodulin-dependent kinase II and LCK tyrosine kinase. Inhibited by cGMP, most likely through a cGMP-binding protein that interacts with OCT1. Electrogenic voltage-dependent transporter that mediates the transport of a variety of organic cations such as endogenous bioactive amines, cationic drugs and xenobiotics. Functions as a pH- and Na(+)-independent, bidirectional transporter. Cation cellular uptake or release is driven by the electrochemical potential (i.e. membrane potential and concentration gradient) and substrate selectivity. Hydrophobicity is a major requirement for recognition in polyvalent substrates and inhibitors. Primarily expressed in the basolateral membrane of hepatocytes and proximal tubules and involved in the uptake and disposition of cationic compounds from the blood by hepatic and renal clearance. Most likely functions as an uptake carrier in enterocytes contributing to the intestinal elimination of organic cations from the systemic circulation. Transports endogenous monoamines such as N-1-methylnicotinamide (NMN), guanidine, neurotransmitters dopamine, serotonin, noradrenaline, adrenaline and histamine, and quaternary ammonium compound such as choline. Also transports natural polyamines such as spermidine, agmatine and putrescine at low affinity, but relatively high turnover. Involved in the hepatic and intestinal uptake of the vitamin B1/thiamine, hence regulating hepatic lipid and energy metabolism. Contributes to the influx and efflux of fatty acid carriers carnitines and acylcarnitines across the basolateral membrane of hepatocytes, from the liver to the systemic circulation and inversely and may be involved in regulating the systemic availability of hepatic acylcarnitines. Also capable of transporting non-amine endogenous compounds such as prostaglandin E2 (PGE2) and prostaglandin F2-alpha (PGF2-alpha). May contribute to the transport of cationic compounds in testes across the blood-testis-barrier. Also mediates the uptake of xenobiotics tributylmethylammonium (TBuMA), quinidine, N-methyl-quinine (NMQ), N-methyl-quinidine (NMQD) N-(4,4-azo-n-pentyl)-quinuclidine (APQ), azidoprocainamide methoiodide (AMP), N-(4,4-azo-n-pentyl)-21-deoxyajmalinium (APDA) and 4-(4-(dimethylamino)styryl)-N-methylpyridinium (ASP). This chain is Solute carrier family 22 member 1 (SLC22A1), found in Sus scrofa (Pig).